The following is a 365-amino-acid chain: Popy Class I histocompatibility antigen, A-1 alpha chain (365 aa).

The signal sequence occupies residues Met-1–Ala-24. The segment at Gly-25 to Gly-114 is alpha-1. At Gly-25–Ile-308 the chain is on the extracellular side. An N-linked (GlcNAc...) asparagine glycan is attached at Asn-110. Residues Gly-115–Thr-206 form an alpha-2 region. 2 cysteine pairs are disulfide-bonded: Cys-125/Cys-188 and Cys-227/Cys-283. The alpha-3 stretch occupies residues Asp-207–Trp-298. Residues Pro-209–Arg-297 form the Ig-like C1-type domain. The tract at residues Glu-299 to Ile-308 is connecting peptide. The helical transmembrane segment at Val-309–Trp-332 threads the bilayer. Residues Arg-333–Val-365 lie on the Cytoplasmic side of the membrane. The interval Lys-340–Val-365 is disordered. Phosphoserine is present on Ser-343. Residues Ser-343 to Ser-359 are compositionally biased toward polar residues. Tyr-344 carries the phosphotyrosine modification. A phosphoserine mark is found at Ser-345, Ser-349, Ser-352, Ser-356, and Ser-359.

It belongs to the MHC class I family. As to quaternary structure, heterodimer of an alpha chain and a beta chain (beta-2-microglobulin).

It is found in the membrane. Functionally, involved in the presentation of foreign antigens to the immune system. This is Popy Class I histocompatibility antigen, A-1 alpha chain from Pongo pygmaeus (Bornean orangutan).